The chain runs to 37 residues: uncharacterized protein (37 aa).

The helical transmembrane segment at 16-36 threads the bilayer; that stretch reads FALIVVLFILLIIVGTAFVGG.

This sequence belongs to the SscA family.

The protein localises to the membrane. This is an uncharacterized protein from Bacillus subtilis (strain 168).